The following is a 92-amino-acid chain: uncharacterized protein (92 aa).

3 consecutive transmembrane segments (helical) span residues 1 to 21, 30 to 50, and 62 to 82; these read MNIYVWLFAIIALSFSALVGL, ANVLVGESIITVVAGTLIVVI, and IALAIFICGVVGAFAFCKVIG.

To M.thermoautotrophicum MTH1250.

Its subcellular location is the cell membrane. This is an uncharacterized protein from Methanocaldococcus jannaschii (strain ATCC 43067 / DSM 2661 / JAL-1 / JCM 10045 / NBRC 100440) (Methanococcus jannaschii).